Reading from the N-terminus, the 211-residue chain is Probable superoxide dismutase [Mn], mitochondrial (211 aa).

Mn(2+) contacts are provided by His36, His84, Asp173, and His177.

It belongs to the iron/manganese superoxide dismutase family. In terms of assembly, homotetramer. The cofactor is Mn(2+).

Its subcellular location is the mitochondrion matrix. The catalysed reaction is 2 superoxide + 2 H(+) = H2O2 + O2. Destroys superoxide anion radicals which are normally produced within the cells and which are toxic to biological systems. The protein is Probable superoxide dismutase [Mn], mitochondrial of Debaryomyces hansenii (strain ATCC 36239 / CBS 767 / BCRC 21394 / JCM 1990 / NBRC 0083 / IGC 2968) (Yeast).